We begin with the raw amino-acid sequence, 954 residues long: ATPase 9, plasma membrane-type (954 aa).

Residues 1 to 66 (MAGNKDSSWD…EKKENKVLKF (66 aa)) lie on the Cytoplasmic side of the membrane. The chain crosses the membrane as a helical span at residues 67 to 86 (LGFMWNPLSWVMELAAIMAI). Residues 87 to 98 (ALANGGGRPPDW) are Extracellular-facing. The chain crosses the membrane as a helical span at residues 99-119 (QDFVGITVLLIINSTISFIEE). Over 120 to 248 (NNAGNAAAAL…GHFQKVLTAI (129 aa)) the chain is Cytoplasmic. The helical transmembrane segment at 249–269 (GNFCICSIAIGMLIEIVVMYP) threads the bilayer. Topologically, residues 270–278 (IQKRAYRDG) are extracellular. A helical transmembrane segment spans residues 279 to 296 (IDNLLVLLIGGIPIAMPT). Topologically, residues 297 to 648 (VLSVTMAIGS…TSRAIFQRMK (352 aa)) are cytoplasmic. Aspartate 334 serves as the catalytic 4-aspartylphosphate intermediate. Aspartate 593 and aspartate 597 together coordinate Mg(2+). A helical membrane pass occupies residues 649–670 (NYTIYAVSITIRIVMGFMLLAL). Topologically, residues 671 to 675 (IWKFD) are extracellular. Residues 676–698 (FSPFMVLIVAILNDGTIMTISKD) traverse the membrane as a helical segment. The Cytoplasmic segment spans residues 699-714 (RVKPSPLPDSWKLKEI). The helical transmembrane segment at 715–735 (FATGVVLGTYLAVMTVVFFWA) threads the bilayer. Residues 736–756 (AESTDFFSAKFGVRSISGNPH) are Extracellular-facing. The chain crosses the membrane as a helical span at residues 757–777 (ELTAAVYLQVSIVSQALIFVT). The Cytoplasmic portion of the chain corresponds to 778 to 789 (RSRSWSYVERPG). The chain crosses the membrane as a helical span at residues 790 to 810 (FWLISAFFMAQLIATLIAVYA). At 811 to 818 (NWNFARIR) the chain is on the extracellular side. A helical transmembrane segment spans residues 819 to 839 (GIGWGWAGVIWLYSIVFYIPL). At 840 to 954 (DILKFIIRYS…IEAIQQHYTL (115 aa)) the chain is on the cytoplasmic side. Threonine 886 carries the phosphothreonine modification. Serine 936 bears the Phosphoserine mark. The tract at residues 952–954 (YTL) is interaction with 14-3-3 proteins. At threonine 953 the chain carries Phosphothreonine.

It belongs to the cation transport ATPase (P-type) (TC 3.A.3) family. Type IIIA subfamily. Binds to 14-3-3 proteins. The binding is induced by phosphorylation of Thr-953. Binding to 14-3-3 proteins activates the H(+)-ATPase. In terms of tissue distribution, anther specific. Expressed in guard cells.

It is found in the membrane. The catalysed reaction is ATP + H2O + H(+)(in) = ADP + phosphate + 2 H(+)(out). Functionally, the plasma membrane H(+) ATPase of plants and fungi generates a proton gradient that drives the active transport of nutrients by H(+)-symport. The resulting external acidification and/or internal alkinization may mediate growth responses. This Arabidopsis thaliana (Mouse-ear cress) protein is ATPase 9, plasma membrane-type (AHA9).